Consider the following 459-residue polypeptide: Cysteine--tRNA ligase (459 aa).

Cys31 is a binding site for Zn(2+). Residues 33-43 (PTVYDNPHIGN) carry the 'HIGH' region motif. Zn(2+) contacts are provided by Cys216, His241, and Glu245. The short motif at 274–278 (KMSKS) is the 'KMSKS' region element. Residue Lys277 coordinates ATP.

The protein belongs to the class-I aminoacyl-tRNA synthetase family. As to quaternary structure, monomer. It depends on Zn(2+) as a cofactor.

Its subcellular location is the cytoplasm. The enzyme catalyses tRNA(Cys) + L-cysteine + ATP = L-cysteinyl-tRNA(Cys) + AMP + diphosphate. In Rickettsia canadensis (strain McKiel), this protein is Cysteine--tRNA ligase.